The sequence spans 147 residues: D(1B) dopamine receptor (147 aa).

The helical transmembrane segment at 1–12 (SILISFPVQLNW) threads the bilayer. Over 13–55 (HRDQAGSWGGLDLTNNLANWTPWEEDVWEPDVRAENCDSSLNR) the chain is Extracellular. N-linked (GlcNAc...) asparagine glycosylation occurs at Asn54. The chain crosses the membrane as a helical span at residues 56 to 78 (TYAISSSLVSFYIPVAIMIVTYT). Residues 79 to 128 (RIYRIAQVQIRRISSLERAAEHAQSCRSSAACAPDTSLRASIKKETKVLK) are Cytoplasmic-facing. The chain crosses the membrane as a helical span at residues 129–147 (TLSVIMGVFVCCWLPFFIL).

The protein belongs to the G-protein coupled receptor 1 family.

It localises to the cell membrane. In terms of biological role, dopamine receptor whose activity is mediated by G proteins which activate adenylyl cyclase. The polypeptide is D(1B) dopamine receptor (DRD5) (Macaca mulatta (Rhesus macaque)).